A 293-amino-acid polypeptide reads, in one-letter code: Methylsterol monooxygenase 1 (293 aa).

2 consecutive transmembrane segments (helical) span residues Leu-55–Ile-75 and Val-100–Thr-120. Positions Cys-145 to Thr-274 constitute a Fatty acid hydroxylase domain. The Histidine box-1 signature appears at His-157–His-161. A Histidine box-2 motif is present at residues His-170 to His-174. Residues Phe-199–Val-219 form a helical membrane-spanning segment. Positions His-249–Met-255 match the Histidine box-3 motif.

This sequence belongs to the sterol desaturase family. Fe cation is required as a cofactor. Post-translationally, ubiquitinated by MARCHF6, leading to proteasomal degradation.

Its subcellular location is the endoplasmic reticulum membrane. It catalyses the reaction 4,4-dimethyl-5alpha-cholest-7-en-3beta-ol + 6 Fe(II)-[cytochrome b5] + 3 O2 + 5 H(+) = 4alpha-carboxy-4beta-methyl-5alpha-cholest-7-ene-3beta-ol + 6 Fe(III)-[cytochrome b5] + 4 H2O. It carries out the reaction 4,4-dimethyl-5alpha-cholesta-8,24-dien-3beta-ol + 6 Fe(II)-[cytochrome b5] + 3 O2 + 5 H(+) = 4beta-methylzymosterol-4alpha-carboxylate + 6 Fe(III)-[cytochrome b5] + 4 H2O. The catalysed reaction is 4alpha-methylzymosterol + 6 Fe(II)-[cytochrome b5] + 3 O2 + 5 H(+) = 4alpha-carboxyzymosterol + 6 Fe(III)-[cytochrome b5] + 4 H2O. The enzyme catalyses 4alpha-methyl-5alpha-cholest-7-en-3beta-ol + 6 Fe(II)-[cytochrome b5] + 3 O2 + 5 H(+) = 4alpha-carboxy-5alpha-cholest-7-en-3beta-ol + 6 Fe(III)-[cytochrome b5] + 4 H2O. It catalyses the reaction 4,4-dimethyl-5alpha-cholest-8-en-3beta-ol + 6 Fe(II)-[cytochrome b5] + 3 O2 + 5 H(+) = 4alpha-carboxy-4beta-methyl-5alpha-cholest-8-en-3beta-ol + 6 Fe(III)-[cytochrome b5] + 4 H2O. It carries out the reaction 4alpha-methyl-5alpha-cholest-8-en-3beta-ol + 6 Fe(II)-[cytochrome b5] + 3 O2 + 5 H(+) = 4alpha-carboxy-5alpha-cholest-8-ene-3beta-ol + 6 Fe(III)-[cytochrome b5] + 4 H2O. The protein operates within steroid biosynthesis; zymosterol biosynthesis; zymosterol from lanosterol: step 3/6. It participates in steroid biosynthesis; cholesterol biosynthesis. Functionally, catalyzes the three-step monooxygenation required for the demethylation of 4,4-dimethyl and 4alpha-methylsterols, which can be subsequently metabolized to cholesterol. The protein is Methylsterol monooxygenase 1 (MSMO1) of Sus scrofa (Pig).